The chain runs to 196 residues: Superantigen-like protein 11 (196 aa).

Residues 65-167 (LDVFVVREGS…RVTMKNGDFY (103 aa)) form a sialyl Lewis X-binding region.

Belongs to the staphylococcal/streptococcal toxin family. In terms of assembly, homodimer (via its C-terminal domain). Interacts with host FCAR and SELPLG (via sialyl Lewis X).

It localises to the secreted. Functionally, secreted protein that plays a role in the inhibition of host immune system. Targets myeloid cells such as monocytes or granulocytes through binding with sialyllactosamine-containing glycoproteins. Prevents initial rolling of neutrophils toward the site of infection by interacting with host SELPLG. Disrupts neutrophil motility by induction of cell adhesion via interacting with glycans but independently of SELPLG. The protein is Superantigen-like protein 11 of Staphylococcus aureus.